The chain runs to 901 residues: Protein SOK1 (901 aa).

Disordered stretches follow at residues 1–87, 106–139, and 162–231; these read MDQP…QNII, RSSGVITPSMSLNASTNATNNDSSGNSANSSDLK, and NDDN…NASN. The segment covering 10–51 has biased composition (low complexity); that stretch reads PTTASNPAPSSTNSSSAPSATNSKQERSSSSLSKPSSVVPSK. Ser-40 and Ser-53 each carry phosphoserine. Composition is skewed to polar residues over residues 74-87 and 106-115; these read GDTSTLDGSSQNII and RSSGVITPSM. Positions 116-138 are enriched in low complexity; the sequence is SLNASTNATNNDSSGNSANSSDL. Residues Ser-191 and Ser-193 each carry the phosphoserine modification. The segment covering 220–231 has biased composition (polar residues); sequence AAQQQPPGNASN. A Phosphoserine modification is found at Ser-245.

It belongs to the TCP11 family.

The protein resides in the nucleus. High copy suppressor of a cyclic AMP-dependent protein kinase mutant. This chain is Protein SOK1 (SOK1), found in Saccharomyces cerevisiae (strain ATCC 204508 / S288c) (Baker's yeast).